Here is a 137-residue protein sequence, read N- to C-terminus: Lysozyme (137 aa).

The N-terminal stretch at 1-20 is a signal peptide; sequence MQRLLGSIVILATVFTFCEA. Residues 21–135 enclose the I-type lysozyme domain; it reads TISSACLRCI…EKVHQQGCNV (115 aa). Intrachain disulfides connect C26-C102, C31-C37, C42-C51, C64-C84, C74-C80, and C98-C116. The Proton donor role is filled by E34. D45 serves as the catalytic Nucleophile. Position 57–63 (57–63) interacts with substrate; that stretch reads KENYWED. Residues Y88 and 109 to 111 contribute to the substrate site; that span reads HNG.

The protein belongs to the glycosyl hydrolase 22 family. Type-I lysozyme subfamily. As to expression, expressed in the basophil cells of the oyster digestive gland.

The protein localises to the secreted. The enzyme catalyses Hydrolysis of (1-&gt;4)-beta-linkages between N-acetylmuramic acid and N-acetyl-D-glucosamine residues in a peptidoglycan and between N-acetyl-D-glucosamine residues in chitodextrins.. Functionally, has bacteriolytic activity. May play a role in digestion and in the host defense mechanisms against invading microbes. This Magallana gigas (Pacific oyster) protein is Lysozyme (lysoz).